A 233-amino-acid chain; its full sequence is Small ribosomal subunit protein uS3 (233 aa).

One can recognise a KH type-2 domain in the interval 39–107; sequence IRAFLKRKLY…DVNINIKEER (69 aa). The span at 212-222 shows a compositional bias: basic and acidic residues; the sequence is MQPEKTEESAP. Residues 212-233 are disordered; the sequence is MQPEKTEESAPAKKSRRTRRGK. A compositionally biased stretch (basic residues) spans 224–233; that stretch reads KKSRRTRRGK.

It belongs to the universal ribosomal protein uS3 family. Part of the 30S ribosomal subunit. Forms a tight complex with proteins S10 and S14.

Functionally, binds the lower part of the 30S subunit head. Binds mRNA in the 70S ribosome, positioning it for translation. In Campylobacter jejuni subsp. doylei (strain ATCC BAA-1458 / RM4099 / 269.97), this protein is Small ribosomal subunit protein uS3.